A 317-amino-acid polypeptide reads, in one-letter code: MTSLTNSLNPARSLAPASNGDVADFFALLKPRVMALVIFTALVGMTVTKSHVNPVIAAVSLLMIAVGAGASGCLNMWWDADVDAVMSRTRTRPIPAGKIRPDEALAFGMTLSVGSVLMLGLAANWLAAGLLAFTIAFYAVIYSMWLKRATAQNIVIGGAAGALPPMIGQAVVTGTVGIEGLVLFLIIFVWTPPHFWALALVKSGDYAKAGIPMMPNVAGPDSTRRQIVAYTLLLAPLGLAPVALGFGGLIYGLVALLGGLAMLALSLQVYHRREGEGADKAAMGLFGFSILYLFLLFSALLAEQGLGLFRPVSQLFG.

8 helical membrane passes run 25-45 (FFAL…LVGM), 54-74 (PVIA…SGCL), 126-146 (LAAG…SMWL), 154-174 (IVIG…VVTG), 181-201 (LVLF…LALV), 227-244 (IVAY…PVAL), 249-271 (LIYG…QVYH), and 281-301 (AAMG…SALL).

The protein belongs to the UbiA prenyltransferase family. Protoheme IX farnesyltransferase subfamily.

The protein localises to the cell inner membrane. It catalyses the reaction heme b + (2E,6E)-farnesyl diphosphate + H2O = Fe(II)-heme o + diphosphate. It participates in porphyrin-containing compound metabolism; heme O biosynthesis; heme O from protoheme: step 1/1. In terms of biological role, converts heme B (protoheme IX) to heme O by substitution of the vinyl group on carbon 2 of heme B porphyrin ring with a hydroxyethyl farnesyl side group. This Methylobacterium sp. (strain 4-46) protein is Protoheme IX farnesyltransferase.